Consider the following 374-residue polypeptide: Chaperone protein DnaJ (374 aa).

In terms of domain architecture, J spans 5 to 70 (DYYEVLGVAK…QKRAAYDRYG (66 aa)). Residues 134 to 212 (GFDTEIRVPS…CDGVGRIRRN (79 aa)) form a CR-type zinc finger. 8 residues coordinate Zn(2+): cysteine 147, cysteine 150, cysteine 164, cysteine 167, cysteine 186, cysteine 189, cysteine 200, and cysteine 203. CXXCXGXG motif repeat units lie at residues 147–154 (CDTCHGSG), 164–171 (CRTCGGSG), 186–193 (CPTCHGTG), and 200–207 (CPSCDGVG).

It belongs to the DnaJ family. Homodimer. Zn(2+) serves as cofactor.

Its subcellular location is the cytoplasm. In terms of biological role, participates actively in the response to hyperosmotic and heat shock by preventing the aggregation of stress-denatured proteins and by disaggregating proteins, also in an autonomous, DnaK-independent fashion. Unfolded proteins bind initially to DnaJ; upon interaction with the DnaJ-bound protein, DnaK hydrolyzes its bound ATP, resulting in the formation of a stable complex. GrpE releases ADP from DnaK; ATP binding to DnaK triggers the release of the substrate protein, thus completing the reaction cycle. Several rounds of ATP-dependent interactions between DnaJ, DnaK and GrpE are required for fully efficient folding. Also involved, together with DnaK and GrpE, in the DNA replication of plasmids through activation of initiation proteins. The protein is Chaperone protein DnaJ of Bordetella petrii (strain ATCC BAA-461 / DSM 12804 / CCUG 43448).